We begin with the raw amino-acid sequence, 320 residues long: Probable 5-dehydro-4-deoxyglucarate dehydratase (320 aa).

It belongs to the DapA family.

It catalyses the reaction 5-dehydro-4-deoxy-D-glucarate + H(+) = 2,5-dioxopentanoate + CO2 + H2O. It participates in carbohydrate acid metabolism; D-glucarate degradation; 2,5-dioxopentanoate from D-glucarate: step 2/2. The protein is Probable 5-dehydro-4-deoxyglucarate dehydratase of Streptomyces griseus subsp. griseus (strain JCM 4626 / CBS 651.72 / NBRC 13350 / KCC S-0626 / ISP 5235).